Consider the following 528-residue polypeptide: Aspartic proteinase-like protein 1 (528 aa).

An N-terminal signal peptide occupies residues 1 to 22 (MVSRSAFLLFCVLFLATEETLA). Residues 100-449 (HYTWIDIGTP…DRENMKLGWS (350 aa)) enclose the Peptidase A1 domain. D118 is an active-site residue. N-linked (GlcNAc...) asparagine glycosylation is found at N193 and N217. D333 is an active-site residue. 2 N-linked (GlcNAc...) asparagine glycosylation sites follow: N358 and N391. The disordered stretch occupies residues 451–503 (SKCQEDKIEPPQASPGSTSSPNPLPTDEQQSRGGHAVSPAIAGKTPSKTPSSS). Residues 464-482 (SPGSTSSPNPLPTDEQQSR) are compositionally biased toward polar residues. A compositionally biased stretch (low complexity) spans 494-503 (KTPSKTPSSS). A lipid anchor (GPI-anchor amidated serine) is attached at S503. A propeptide spans 504-528 (SSYSFSSIMRLFNSLLLLHWLASLM) (removed in mature form).

Belongs to the peptidase A1 family.

Its subcellular location is the cell membrane. In Arabidopsis thaliana (Mouse-ear cress), this protein is Aspartic proteinase-like protein 1.